Reading from the N-terminus, the 490-residue chain is Betaine aldehyde dehydrogenase (490 aa).

Positions 26, 27, and 93 each coordinate K(+). Gly150–Trp152 is an NAD(+) binding site. The active-site Charge relay system is the Lys162. Lys176–Glu179 contributes to the NAD(+) binding site. K(+) is bound at residue Val180. NAD(+) is bound at residue Gly230 to Ser233. Leu246 lines the K(+) pocket. Glu252 acts as the Proton acceptor in catalysis. NAD(+) contacts are provided by Gly254, Cys286, and Glu387. The Nucleophile role is filled by Cys286. A Cysteine sulfenic acid (-SOH) modification is found at Cys286. Residues Lys457 and Gly460 each contribute to the K(+) site. The Charge relay system role is filled by Glu464.

It belongs to the aldehyde dehydrogenase family. As to quaternary structure, dimer of dimers. K(+) serves as cofactor.

The catalysed reaction is betaine aldehyde + NAD(+) + H2O = glycine betaine + NADH + 2 H(+). Its pathway is amine and polyamine biosynthesis; betaine biosynthesis via choline pathway; betaine from betaine aldehyde: step 1/1. Functionally, involved in the biosynthesis of the osmoprotectant glycine betaine. Catalyzes the irreversible oxidation of betaine aldehyde to the corresponding acid. This is Betaine aldehyde dehydrogenase from Escherichia coli O8 (strain IAI1).